A 330-amino-acid polypeptide reads, in one-letter code: Geranylgeranyl diphosphate synthase (330 aa).

Residues Lys-43, Arg-46, and His-75 each coordinate isopentenyl diphosphate. Positions 82 and 86 each coordinate Mg(2+). Arg-91 is an an all-trans-polyprenyl diphosphate binding site. Isopentenyl diphosphate is bound at residue Arg-92. An all-trans-polyprenyl diphosphate-binding residues include Lys-175, Thr-176, Gln-213, Lys-230, and Lys-240.

The protein belongs to the FPP/GGPP synthase family. Mg(2+) serves as cofactor.

It catalyses the reaction isopentenyl diphosphate + (2E,6E)-farnesyl diphosphate = (2E,6E,10E)-geranylgeranyl diphosphate + diphosphate. Its pathway is isoprenoid biosynthesis; geranylgeranyl diphosphate biosynthesis; geranylgeranyl diphosphate from farnesyl diphosphate and isopentenyl diphosphate: step 1/1. Functionally, catalyzes the condensation of isopentenyl pyrophosphate with the allylic pyrophosphates to yield geranylgeranyl diphosphate (GGPP) which is a precursor of the ether-linked lipids. It is able to use dimethylallyl diphosphate (DMAPP), geranyl diphosphate (GPP), and (all-E)-geranyl diphosphate (E-FPP) as an allylic substrate. The sequence is that of Geranylgeranyl diphosphate synthase (gds) from Sulfolobus acidocaldarius (strain ATCC 33909 / DSM 639 / JCM 8929 / NBRC 15157 / NCIMB 11770).